The following is a 260-amino-acid chain: Flap endonuclease Xni (260 aa).

A Mg(2+)-binding site is contributed by Asp112. One can recognise a 5'-3' exonuclease domain in the interval 168–258 (LQPSQLVDFW…FNLKDLRYTP (91 aa)). K(+) contacts are provided by Leu179, Val190, and Ile193. The tract at residues 192-197 (GIGEKT) is interaction with DNA.

This sequence belongs to the Xni family. Mg(2+) serves as cofactor. K(+) is required as a cofactor.

In terms of biological role, has flap endonuclease activity. During DNA replication, flap endonucleases cleave the 5'-overhanging flap structure that is generated by displacement synthesis when DNA polymerase encounters the 5'-end of a downstream Okazaki fragment. The chain is Flap endonuclease Xni from Tolumonas auensis (strain DSM 9187 / NBRC 110442 / TA 4).